Reading from the N-terminus, the 191-residue chain is Potassium-transporting ATPase KdpC subunit (191 aa).

Residues 10-30 (ITLVFCVFFSVFYILVLWLFA) form a helical membrane-spanning segment.

This sequence belongs to the KdpC family. As to quaternary structure, the system is composed of three essential subunits: KdpA, KdpB and KdpC.

The protein localises to the cell inner membrane. Its function is as follows. Part of the high-affinity ATP-driven potassium transport (or Kdp) system, which catalyzes the hydrolysis of ATP coupled with the electrogenic transport of potassium into the cytoplasm. This subunit acts as a catalytic chaperone that increases the ATP-binding affinity of the ATP-hydrolyzing subunit KdpB by the formation of a transient KdpB/KdpC/ATP ternary complex. The protein is Potassium-transporting ATPase KdpC subunit of Bacteroides fragilis (strain YCH46).